Here is a 60-residue protein sequence, read N- to C-terminus: Potassium channel toxin alpha-KTx 29.2 (60 aa).

An N-terminal signal peptide occupies residues 1–28 (MKSVCGVLIILVVLTTMLSISTFSTVGA). 3 disulfides stabilise this stretch: Cys32–Cys51, Cys40–Cys56, and Cys44–Cys58.

It belongs to the short scorpion toxin superfamily. Potassium channel inhibitor family. Alpha-KTx 29 subfamily. As to expression, expressed by the venom gland.

Its subcellular location is the secreted. In terms of biological role, weakly inhibits the Kv1.3/KCNA3 channel (1 uM of thetoxin inhibits currents by 13.2%) and Kv7.1/KCNQ1 channel (10 uM of the toxin inhibits currents by 27.7%). This chain is Potassium channel toxin alpha-KTx 29.2, found in Lychas mucronatus (Chinese swimming scorpion).